Here is a 234-residue protein sequence, read N- to C-terminus: Sugar fermentation stimulation protein homolog (234 aa).

The protein belongs to the SfsA family.

The protein is Sugar fermentation stimulation protein homolog of Pseudoalteromonas atlantica (strain T6c / ATCC BAA-1087).